Reading from the N-terminus, the 1464-residue chain is Collagen alpha-1(III) chain (1464 aa).

The N-terminal stretch at 1–23 (MMSFVQSGTWFLLTLLHPTLILA) is a signal peptide. A propeptide spans 24-154 (QQSNVDELGC…CPTGGQNYSP (131 aa)) (N-terminal propeptide). The region spanning 31 to 90 (LGCSHLGQSYESRDVWKPEPCQICVCDSGSVLCDDIICDEEPLDCPNPEIPFGECCAICP) is the VWFC domain. Residues 97-1195 (PVLPDGHGPQ…PGPPGAPGPC (1099 aa)) form a disordered region. Residues 100–109 (PDGHGPQGPK) show a composition bias toward low complexity. Residues 147-156 (TGGQNYSPQF) are compositionally biased toward polar residues. The segment at 155-169 (QFDSYDVKSGVGGMG) is nonhelical region (N-terminal). A compositionally biased stretch (gly residues) spans 164-173 (GVGGMGGYPG). The triple-helical region stretch occupies residues 170-1195 (GYPGPAGPPG…PGPPGAPGPC (1026 aa)). A compositionally biased stretch (pro residues) spans 174-184 (PAGPPGPPGPP). Low complexity predominate over residues 186–198 (SSGHPGSPGSPGY). Basic and acidic residues predominate over residues 228–240 (KDGESGRPGRPGE). At lysine 262 the chain carries 5-hydroxylysine; alternate. Residue lysine 262 is glycosylated (O-linked (Gal...) hydroxylysine; alternate). Basic and acidic residues predominate over residues 265 to 276 (RGFDGRNGEKGE). 5-hydroxylysine is present on lysine 283. 2 stretches are compositionally biased toward low complexity: residues 310 to 321 (PGLPGAAGARGN) and 354 to 379 (PAGS…AGAQ). Positions 389–398 (GSPGGKGEMG) are enriched in gly residues. Residues 399–412 (PAGIPGAPGLIGAR) are compositionally biased toward low complexity. A compositionally biased stretch (gly residues) spans 527–548 (GTPGGPGIRGMPGSPGGPGNDG). A compositionally biased stretch (low complexity) spans 606 to 615 (PAGKNGETGP). Gly residues-rich tracts occupy residues 641–650 (GIPGTGGPPG) and 668–677 (GAPGGKGDSG). Low complexity predominate over residues 678–691 (APGERGPPGTAGIP). Positions 692 to 708 (GARGGAGPPGPEGGKGP) are enriched in gly residues. A compositionally biased stretch (low complexity) spans 717–727 (ASGSPGLQGMP). Basic and acidic residues predominate over residues 822-834 (AKGERGAPGEKGE). The residue at position 859 (lysine 859) is a 5-hydroxylysine. Positions 863-879 (GSPGGPGTAGFPGGRGL) are enriched in gly residues. The span at 889-906 (PGPPGPSGAPGKDGPPGP) shows a compositional bias: pro residues. Low complexity-rich tracts occupy residues 907–934 (AGNS…KGPP) and 945–960 (PLGI…LAGP). Lysine 976 bears the 5-hydroxylysine mark. Residues 1045–1054 (PGHPGPPGPV) are compositionally biased toward pro residues. Residues 1068 to 1084 (PAGPSGAPGPAGARGAP) show a composition bias toward low complexity. 5-hydroxylysine is present on residues lysine 1093 and lysine 1105. Over residues 1120-1132 (PGAAGHQGAIGSP) the composition is skewed to low complexity. A compositionally biased stretch (pro residues) spans 1180–1192 (PGQPGPPGPPGAP). Positions 1220–1464 (DDPMDFKINT…GVDIGPVCFL (245 aa)) are cleaved as a propeptide — C-terminal propeptide. A Fibrillar collagen NC1 domain is found at 1230 to 1464 (EEIMSSLKSV…GVDIGPVCFL (235 aa)). 3 disulfides stabilise this stretch: cysteine 1260/cysteine 1292, cysteine 1300/cysteine 1462, and cysteine 1370/cysteine 1415. Aspartate 1278, asparagine 1280, glutamine 1281, cysteine 1283, and aspartate 1286 together coordinate Ca(2+).

Belongs to the fibrillar collagen family. In terms of assembly, trimers of identical alpha 1(III) chains. The chains are linked to each other by interchain disulfide bonds. Trimers are also cross-linked via hydroxylysines. Interacts with ADGRG1. Proline residues at the third position of the tripeptide repeating unit (G-X-Y) are hydroxylated in some or all of the chains. In terms of processing, O-linked glycan consists of a Glc-Gal disaccharide bound to the oxygen atom of a post-translationally added hydroxyl group. As to expression, expressed in embryonic brain, specifically in the meninges, pial basement membrane and blood vessels (at protein level).

It is found in the secreted. Its subcellular location is the extracellular space. The protein localises to the extracellular matrix. Its function is as follows. Collagen type III occurs in most soft connective tissues along with type I collagen. Involved in regulation of cortical development. Is the major ligand of ADGRG1 in the developing brain and binding to ADGRG1 inhibits neuronal migration and activates the RhoA pathway by coupling ADGRG1 to GNA13 and possibly GNA12. This Mus musculus (Mouse) protein is Collagen alpha-1(III) chain (Col3a1).